The following is a 389-amino-acid chain: 1-deoxy-D-xylulose 5-phosphate reductoisomerase (389 aa).

NADPH is bound by residues T10, G11, S12, I13, N38, and N122. K123 is a binding site for 1-deoxy-D-xylulose 5-phosphate. E124 serves as a coordination point for NADPH. D148 lines the Mn(2+) pocket. 4 residues coordinate 1-deoxy-D-xylulose 5-phosphate: S149, E150, S173, and H196. Mn(2+) is bound at residue E150. G202 serves as a coordination point for NADPH. The 1-deoxy-D-xylulose 5-phosphate site is built by S209, N214, K215, and E218. E218 provides a ligand contact to Mn(2+).

Belongs to the DXR family. Mg(2+) is required as a cofactor. Requires Mn(2+) as cofactor.

It carries out the reaction 2-C-methyl-D-erythritol 4-phosphate + NADP(+) = 1-deoxy-D-xylulose 5-phosphate + NADPH + H(+). The protein operates within isoprenoid biosynthesis; isopentenyl diphosphate biosynthesis via DXP pathway; isopentenyl diphosphate from 1-deoxy-D-xylulose 5-phosphate: step 1/6. Catalyzes the NADPH-dependent rearrangement and reduction of 1-deoxy-D-xylulose-5-phosphate (DXP) to 2-C-methyl-D-erythritol 4-phosphate (MEP). In Wolbachia sp. subsp. Brugia malayi (strain TRS), this protein is 1-deoxy-D-xylulose 5-phosphate reductoisomerase.